We begin with the raw amino-acid sequence, 354 residues long: Trans-L-3-hydroxyproline dehydratase (354 aa).

Cysteine 104 functions as the Proton acceptor in the catalytic mechanism. Substrate contacts are provided by residues 105–106 (GH), aspartate 269, and 274–275 (GS).

It belongs to the proline racemase family. As to quaternary structure, homodimer.

It carries out the reaction trans-3-hydroxy-L-proline = 1-pyrroline-2-carboxylate + H2O. Its function is as follows. Catalyzes the dehydration of trans-3-hydroxy-L-proline to delta-1-pyrroline-2-carboxylate (Pyr2C). This is Trans-L-3-hydroxyproline dehydratase (L3hypdh) from Mus musculus (Mouse).